Consider the following 573-residue polypeptide: DEAD-box ATP-dependent RNA helicase 47A (573 aa).

The Q motif signature appears at lysine 131–serine 159. A Helicase ATP-binding domain is found at isoleucine 162–valine 362. Residue serine 175 to threonine 182 participates in ATP binding. A DEAD box motif is present at residues aspartate 293 to aspartate 296. The 145-residue stretch at threonine 421–leucine 565 folds into the Helicase C-terminal domain.

Belongs to the DEAD box helicase family.

It catalyses the reaction ATP + H2O = ADP + phosphate + H(+). This chain is DEAD-box ATP-dependent RNA helicase 47A, found in Oryza sativa subsp. japonica (Rice).